The sequence spans 271 residues: p-hydroxybenzoate hydroxylase transcriptional activator (271 aa).

An HTH iclR-type domain is found at isoleucine 23–histidine 83. The segment at residues valine 45–lysine 64 is a DNA-binding region (H-T-H motif). The region spanning leucine 98–valine 271 is the IclR-ED domain.

In terms of biological role, positive regulator of the pobA gene for p-hydroxybenzoate hydroxylase. The polypeptide is p-hydroxybenzoate hydroxylase transcriptional activator (pobR) (Acinetobacter baylyi (strain ATCC 33305 / BD413 / ADP1)).